Consider the following 224-residue polypeptide: Deoxyribose-phosphate aldolase (224 aa).

Asp91 functions as the Proton donor/acceptor in the catalytic mechanism. Lys152 functions as the Schiff-base intermediate with acetaldehyde in the catalytic mechanism. Lys181 acts as the Proton donor/acceptor in catalysis.

This sequence belongs to the DeoC/FbaB aldolase family. DeoC type 1 subfamily.

It is found in the cytoplasm. The enzyme catalyses 2-deoxy-D-ribose 5-phosphate = D-glyceraldehyde 3-phosphate + acetaldehyde. The protein operates within carbohydrate degradation; 2-deoxy-D-ribose 1-phosphate degradation; D-glyceraldehyde 3-phosphate and acetaldehyde from 2-deoxy-alpha-D-ribose 1-phosphate: step 2/2. Its function is as follows. Catalyzes a reversible aldol reaction between acetaldehyde and D-glyceraldehyde 3-phosphate to generate 2-deoxy-D-ribose 5-phosphate. This is Deoxyribose-phosphate aldolase from Mycoplasma pneumoniae (strain ATCC 29342 / M129 / Subtype 1) (Mycoplasmoides pneumoniae).